The chain runs to 301 residues: UDP-3-O-acyl-N-acetylglucosamine deacetylase (301 aa).

Residues His-81, His-237, and Asp-241 each coordinate Zn(2+). Catalysis depends on His-264, which acts as the Proton donor.

This sequence belongs to the LpxC family. Zn(2+) is required as a cofactor.

The catalysed reaction is a UDP-3-O-[(3R)-3-hydroxyacyl]-N-acetyl-alpha-D-glucosamine + H2O = a UDP-3-O-[(3R)-3-hydroxyacyl]-alpha-D-glucosamine + acetate. It functions in the pathway glycolipid biosynthesis; lipid IV(A) biosynthesis; lipid IV(A) from (3R)-3-hydroxytetradecanoyl-[acyl-carrier-protein] and UDP-N-acetyl-alpha-D-glucosamine: step 2/6. Its function is as follows. Catalyzes the hydrolysis of UDP-3-O-myristoyl-N-acetylglucosamine to form UDP-3-O-myristoylglucosamine and acetate, the committed step in lipid A biosynthesis. This chain is UDP-3-O-acyl-N-acetylglucosamine deacetylase, found in Leptospira borgpetersenii serovar Hardjo-bovis (strain JB197).